A 90-amino-acid chain; its full sequence is PqqA binding protein 2 (90 aa).

This sequence belongs to the PqqD family. As to quaternary structure, monomer. Interacts with PqqE.

Its pathway is cofactor biosynthesis; pyrroloquinoline quinone biosynthesis. In terms of biological role, functions as a PqqA binding protein and presents PqqA to PqqE, in the pyrroloquinoline quinone (PQQ) biosynthetic pathway. This chain is PqqA binding protein 2 (pqqD2), found in Pseudomonas putida (strain ATCC 47054 / DSM 6125 / CFBP 8728 / NCIMB 11950 / KT2440).